Here is an 80-residue protein sequence, read N- to C-terminus: EMBRYO SURROUNDING FACTOR 1-like protein 1 (80 aa).

An N-terminal signal peptide occupies residues 1–22 (MKSSHIALLCIVVLSLFALHEC). 4 disulfide bridges follow: cysteine 38-cysteine 52, cysteine 43-cysteine 78, cysteine 50-cysteine 74, and cysteine 53-cysteine 64.

The protein belongs to the MEG family. In terms of tissue distribution, expressed in leaves.

This Arabidopsis thaliana (Mouse-ear cress) protein is EMBRYO SURROUNDING FACTOR 1-like protein 1 (ESFL1).